The chain runs to 949 residues: Bifunctional uridylyltransferase/uridylyl-removing enzyme (949 aa).

Residues 1-37 (MKETSFWGETPSLSFADDTDKPLSDRTASPPCDPASS) are disordered. The segment at 1–395 (MKETSFWGET…TTGEPPKVVP (395 aa)) is uridylyltransferase. Residues 396–756 (GPEEFQTIAG…AYPIPERGVT (361 aa)) are uridylyl-removing. An HD domain is found at 516 to 632 (VDEHIVEAVR…LDLADTIQSP (117 aa)). ACT domains are found at residues 757–834 (ELTV…LDIR) and 870–949 (VIEV…TPAS).

The protein belongs to the GlnD family. It depends on Mg(2+) as a cofactor.

The catalysed reaction is [protein-PII]-L-tyrosine + UTP = [protein-PII]-uridylyl-L-tyrosine + diphosphate. It catalyses the reaction [protein-PII]-uridylyl-L-tyrosine + H2O = [protein-PII]-L-tyrosine + UMP + H(+). Its activity is regulated as follows. Uridylyltransferase (UTase) activity is inhibited by glutamine, while glutamine activates uridylyl-removing (UR) activity. Its function is as follows. Modifies, by uridylylation and deuridylylation, the PII regulatory proteins (GlnB and homologs), in response to the nitrogen status of the cell that GlnD senses through the glutamine level. Under low glutamine levels, catalyzes the conversion of the PII proteins and UTP to PII-UMP and PPi, while under higher glutamine levels, GlnD hydrolyzes PII-UMP to PII and UMP (deuridylylation). Thus, controls uridylylation state and activity of the PII proteins, and plays an important role in the regulation of nitrogen assimilation and metabolism. This chain is Bifunctional uridylyltransferase/uridylyl-removing enzyme, found in Gluconobacter oxydans (strain 621H) (Gluconobacter suboxydans).